Consider the following 406-residue polypeptide: Synaptic vesicle membrane protein VAT-1 homolog (406 aa).

Residues 1-57 (MSAEREAAEAATVAAATEAGAETGTGAGEGAPSQPPTVEVASDPQPPPAPEASASAS) form a disordered region. Serine 2 is subject to N-acetylserine. Serine 2 is subject to Phosphoserine. Positions 9-22 (EAATVAAATEAGAE) are enriched in low complexity. Phosphoserine is present on residues serine 33 and serine 42.

Belongs to the zinc-containing alcohol dehydrogenase family. Quinone oxidoreductase subfamily.

It is found in the cytoplasm. The protein resides in the mitochondrion outer membrane. In terms of biological role, plays a part in calcium-regulated keratinocyte activation in epidermal repair mechanisms. Has no effect on cell proliferation. Possesses ATPase activity. Negatively regulates mitochondrial fusion in cooperation with mitofusin proteins (MFN1-2). The polypeptide is Synaptic vesicle membrane protein VAT-1 homolog (Vat1) (Mus musculus (Mouse)).